We begin with the raw amino-acid sequence, 358 residues long: Arginine kinase (358 aa).

The Phosphagen kinase N-terminal domain occupies 6 to 88; sequence SVEELWAKLD…LDAVIKEYHK (83 aa). 61 to 65 lines the substrate pocket; it reads GVGIY. The 238-residue stretch at 116-353 folds into the Phosphagen kinase C-terminal domain; it reads YIVSTRVRVG…EACLAKEKEL (238 aa). ATP contacts are provided by residues 119–123 and His182; that span reads STRVR. Glu222 contributes to the substrate binding site. ATP is bound at residue Arg226. Cys269 contributes to the substrate binding site. ATP contacts are provided by residues 278–282 and 306–311; these read RASVH and RGIHGE. Glu311 serves as a coordination point for substrate.

The protein belongs to the ATP:guanido phosphotransferase family. As to quaternary structure, monomer.

The enzyme catalyses L-arginine + ATP = N(omega)-phospho-L-arginine + ADP + H(+). In Haliotis madaka (Giant abalone), this protein is Arginine kinase.